The chain runs to 1209 residues: DNA-directed RNA polymerase subunit beta (1209 aa).

Positions 1173-1192 (QQEKKKLAEEAAKKDDKPDE) are enriched in basic and acidic residues. The interval 1173–1209 (QQEKKKLAEEAAKKDDKPDEPVDESDSSTSSDDKVSK) is disordered.

It belongs to the RNA polymerase beta chain family. In terms of assembly, the RNAP catalytic core consists of 2 alpha, 1 beta, 1 beta' and 1 omega subunit. When a sigma factor is associated with the core the holoenzyme is formed, which can initiate transcription.

The enzyme catalyses RNA(n) + a ribonucleoside 5'-triphosphate = RNA(n+1) + diphosphate. Functionally, DNA-dependent RNA polymerase catalyzes the transcription of DNA into RNA using the four ribonucleoside triphosphates as substrates. This chain is DNA-directed RNA polymerase subunit beta, found in Lactobacillus johnsonii (strain CNCM I-12250 / La1 / NCC 533).